The following is a 118-amino-acid chain: Peptidyl-tRNA hydrolase (118 aa).

Belongs to the PTH2 family.

Its subcellular location is the cytoplasm. It carries out the reaction an N-acyl-L-alpha-aminoacyl-tRNA + H2O = an N-acyl-L-amino acid + a tRNA + H(+). Its function is as follows. The natural substrate for this enzyme may be peptidyl-tRNAs which drop off the ribosome during protein synthesis. This Thermococcus onnurineus (strain NA1) protein is Peptidyl-tRNA hydrolase.